Reading from the N-terminus, the 344-residue chain is 4-dimethylallyltryptophan N-methyltransferase easF (344 aa).

This sequence belongs to the methyltransferase superfamily. Homodimer.

The catalysed reaction is 4-(3-methylbut-2-enyl)-L-tryptophan + S-adenosyl-L-methionine = 4-(3-methylbut-2-enyl)-L-abrine + S-adenosyl-L-homocysteine + H(+). It participates in alkaloid biosynthesis; ergot alkaloid biosynthesis. 4-dimethylallyltryptophan N-methyltransferase; part of the gene cluster that mediates the biosynthesis of fungal ergot alkaloid. DmaW catalyzes the first step of ergot alkaloid biosynthesis by condensing dimethylallyl diphosphate (DMAP) and tryptophan to form 4-dimethylallyl-L-tryptophan. The second step is catalyzed by the methyltransferase easF that methylates 4-dimethylallyl-L-tryptophan in the presence of S-adenosyl-L-methionine, resulting in the formation of 4-dimethylallyl-L-abrine. The catalase easC and the FAD-dependent oxidoreductase easE then transform 4-dimethylallyl-L-abrine to chanoclavine-I which is further oxidized by easD in the presence of NAD(+), resulting in the formation of chanoclavine-I aldehyde. Agroclavine dehydrogenase easG then mediates the conversion of chanoclavine-I aldehyde to agroclavine via a non-enzymatic adduct reaction: the substrate is an iminium intermediate that is formed spontaneously from chanoclavine-I aldehyde in the presence of glutathione. The presence of easA is not required to complete this reaction. Further conversion of agroclavine to paspalic acid is a two-step process involving oxidation of agroclavine to elymoclavine and of elymoclavine to paspalic acid, the second step being performed by the elymoclavine oxidase cloA. Paspalic acid is then further converted to D-lysergic acid. Ergopeptines are assembled from D-lysergic acid and three different amino acids by the D-lysergyl-peptide-synthetases composed each of a monomudular and a trimodular nonribosomal peptide synthetase subunit. LpsB and lpsC encode the monomodular subunits responsible for D-lysergic acid activation and incorporation into the ergopeptine backbone. LpsA1 and A2 subunits encode the trimodular nonribosomal peptide synthetase assembling the tripeptide portion of ergopeptines. LpsA1 is responsible for formation of the major ergopeptine, ergotamine, and lpsA2 for alpha-ergocryptine, the minor ergopeptine of the total alkaloid mixture elaborated by C.purpurea. D-lysergyl-tripeptides are assembled by the nonribosomal peptide synthetases and released as N-(D-lysergyl-aminoacyl)-lactams. Cyclolization of the D-lysergyl-tripeptides is performed by the Fe(2+)/2-ketoglutarate-dependent dioxygenase easH which introduces a hydroxyl group into N-(D-lysergyl-aminoacyl)-lactam at alpha-C of the aminoacyl residue followed by spontaneous condensation with the terminal lactam carbonyl group. The chain is 4-dimethylallyltryptophan N-methyltransferase easF from Claviceps purpurea (strain 20.1) (Ergot fungus).